The sequence spans 177 residues: DNA repair protein RAD33 (177 aa).

Ser2 is subject to N-acetylserine. A Glycyl lysine isopeptide (Lys-Gly) (interchain with G-Cter in ubiquitin) cross-link involves residue Lys19.

The protein localises to the nucleus. Functionally, involved in nucleotide excision repair (NER) of damaged DNA. Required for the repair of RNA polymerase I-transcribed rDNA and RNA polymerase II-transcribed DNA regions. May have a role in stabilizing the DNA repair proteins RAD4 and RAD34. This Saccharomyces cerevisiae (strain ATCC 204508 / S288c) (Baker's yeast) protein is DNA repair protein RAD33 (RAD33).